Reading from the N-terminus, the 496-residue chain is Polyamine oxidase 6 (496 aa).

Positions 1 to 27 (MTKPTTMAIFLVLALSIAQLLPSLVAG) are cleaved as a signal peptide. 2 residues coordinate FAD: Glu-61 and Arg-69. Residues Asn-103 and Asn-150 are each glycosylated (N-linked (GlcNAc...) asparagine). Position 261 (Val-261) interacts with FAD. The N-linked (GlcNAc...) asparagine glycan is linked to Asn-278. Glu-454 contacts FAD.

This sequence belongs to the flavin monoamine oxidase family. Requires FAD as cofactor.

Its subcellular location is the secreted. The protein localises to the extracellular space. It is found in the apoplast. It participates in amine and polyamine degradation; spermine degradation. Flavoenzyme involved in polyamine back-conversion. Catalyzes the oxidation of the secondary amino group of polyamines, such as spermine and spermidine. The protein is Polyamine oxidase 6 of Oryza sativa subsp. japonica (Rice).